The chain runs to 447 residues: Cysteine--tRNA ligase (447 aa).

Cys28 lines the Zn(2+) pocket. Positions 30 to 40 (PTVYNYIHIGN) match the 'HIGH' region motif. Zn(2+) contacts are provided by Cys211, His236, and Glu240. Positions 268–272 (KMSKS) match the 'KMSKS' region motif. Lys271 provides a ligand contact to ATP.

It belongs to the class-I aminoacyl-tRNA synthetase family. In terms of assembly, monomer. Zn(2+) is required as a cofactor.

It localises to the cytoplasm. The enzyme catalyses tRNA(Cys) + L-cysteine + ATP = L-cysteinyl-tRNA(Cys) + AMP + diphosphate. This is Cysteine--tRNA ligase from Streptococcus agalactiae serotype V (strain ATCC BAA-611 / 2603 V/R).